The sequence spans 395 residues: Putative transport protein sll0063 (395 aa).

The next 8 helical transmembrane spans lie at 24–44 (LNAI…VLNA), 50–70 (IFGY…IAFL), 91–111 (FVFL…IPLA), 180–200 (VFTV…FYLL), 245–265 (ALGL…LFGL), 269–289 (VMAL…FLVA), 295–315 (MALQ…NGIA), and 328–348 (FWVL…GVIV).

It belongs to the autoinducer-2 exporter (AI-2E) (TC 2.A.86) family.

The protein resides in the cell membrane. The sequence is that of Putative transport protein sll0063 from Synechocystis sp. (strain ATCC 27184 / PCC 6803 / Kazusa).